Reading from the N-terminus, the 201-residue chain is Achaete-scute complex protein T5 (201 aa).

The segment covering 1–10 (MALGSENHSV) has biased composition (polar residues). Residues 1-32 (MALGSENHSVFNDDEESSSAFNGPSVIRRNAR) form a disordered region. Residues 24–90 (PSVIRRNARE…KMAVEYIRRL (67 aa)) form the bHLH domain.

In terms of assembly, efficient DNA binding requires dimerization with another bHLH protein. In terms of tissue distribution, l(1)SC, SC and AC strongly label the presumptive stomatogastric nervous system, while ASE is more prominent in the presumptive procephalic lobe.

AS-C proteins are involved in the determination of the neuronal precursors in the peripheral nervous system and the central nervous system. This is Achaete-scute complex protein T5 (ac) from Drosophila melanogaster (Fruit fly).